We begin with the raw amino-acid sequence, 239 residues long: uncharacterized protein (239 aa).

The next 3 membrane-spanning stretches (helical) occupy residues 125-144 (LAII…LILY), 149-171 (IFVL…FLFL), and 197-216 (SVLN…GILF).

Its subcellular location is the cell membrane. This is an uncharacterized protein from Aquifex aeolicus (strain VF5).